The sequence spans 271 residues: Large ribosomal subunit protein eL8 (271 aa).

This sequence belongs to the eukaryotic ribosomal protein eL8 family.

The polypeptide is Large ribosomal subunit protein eL8 (RpL7A) (Drosophila melanogaster (Fruit fly)).